The chain runs to 47 residues: Large ribosomal subunit protein bL36B (47 aa).

Belongs to the bacterial ribosomal protein bL36 family.

The protein is Large ribosomal subunit protein bL36B of Pectobacterium atrosepticum (strain SCRI 1043 / ATCC BAA-672) (Erwinia carotovora subsp. atroseptica).